Consider the following 397-residue polypeptide: MVFRTLDDVDVLGKRVLVRVDFNVPMALGKVCDETRLVRHKETLVELQKRGAKLILLSHCGRPKGKIEPEFSLRPVVSVLEKIINQPVAFAPDCIGSTVQVAVEALQNGDVLLLENVRFYAGEEKNDCSFAGALAHNGDLYVNDAFSVSHRAHASVEGITRLLPSYAGRSLQGELQALEKGLGNPTRPVVALVGGAKVSSKLFVLNHLVEKVDTLVIGGGMANSFLAAQGIHVGKSLCEHTLMETVKKIIKKAQECHCTLLLPVDVVVGFRFEKDAPHRLYDIGDIPEEGMILDIGTRSIVHINSVIDKAATLVWNGPLGVFEMPPFDKGTIAVARHAAERSLTGRLVSIAGGGDTVFALNHADVANDFTYLSTAGGAFLEWMEGKVLPGILALMQP.

Residues 21–23, R36, 59–62, R118, and R151 contribute to the substrate site; these read DFN and HCGR. Residues K201, E323, and 353–356 each bind ATP; that span reads GGDT.

It belongs to the phosphoglycerate kinase family. In terms of assembly, monomer.

The protein resides in the cytoplasm. The enzyme catalyses (2R)-3-phosphoglycerate + ATP = (2R)-3-phospho-glyceroyl phosphate + ADP. It participates in carbohydrate degradation; glycolysis; pyruvate from D-glyceraldehyde 3-phosphate: step 2/5. This chain is Phosphoglycerate kinase, found in Bartonella tribocorum (strain CIP 105476 / IBS 506).